Here is a 418-residue protein sequence, read N- to C-terminus: Serine hydroxymethyltransferase (418 aa).

Residues L121 and 125–127 contribute to the (6S)-5,6,7,8-tetrahydrofolate site; that span reads GHL. K230 carries the post-translational modification N6-(pyridoxal phosphate)lysine. 356-358 is a binding site for (6S)-5,6,7,8-tetrahydrofolate; it reads SPF.

Belongs to the SHMT family. As to quaternary structure, homodimer. The cofactor is pyridoxal 5'-phosphate.

It localises to the cytoplasm. It carries out the reaction (6R)-5,10-methylene-5,6,7,8-tetrahydrofolate + glycine + H2O = (6S)-5,6,7,8-tetrahydrofolate + L-serine. It functions in the pathway one-carbon metabolism; tetrahydrofolate interconversion. The protein operates within amino-acid biosynthesis; glycine biosynthesis; glycine from L-serine: step 1/1. Functionally, catalyzes the reversible interconversion of serine and glycine with tetrahydrofolate (THF) serving as the one-carbon carrier. This reaction serves as the major source of one-carbon groups required for the biosynthesis of purines, thymidylate, methionine, and other important biomolecules. Also exhibits THF-independent aldolase activity toward beta-hydroxyamino acids, producing glycine and aldehydes, via a retro-aldol mechanism. This is Serine hydroxymethyltransferase from Shewanella halifaxensis (strain HAW-EB4).